A 137-amino-acid chain; its full sequence is Fructose-bisphosphate aldolase C (137 aa).

The active-site Schiff-base intermediate with dihydroxyacetone-P is Lys3.

Belongs to the class I fructose-bisphosphate aldolase family. Homotetramer.

The catalysed reaction is beta-D-fructose 1,6-bisphosphate = D-glyceraldehyde 3-phosphate + dihydroxyacetone phosphate. Its pathway is carbohydrate degradation; glycolysis; D-glyceraldehyde 3-phosphate and glycerone phosphate from D-glucose: step 4/4. This is Fructose-bisphosphate aldolase C (ALDOC) from Gallus gallus (Chicken).